The following is a 314-amino-acid chain: uncharacterized protein (314 aa).

Residues 1 to 71 (MAGNSQRRGA…QRAGRKADET (71 aa)) are disordered. G266, I286, and L295 together coordinate S-adenosyl-L-methionine.

This sequence belongs to the class IV-like SAM-binding methyltransferase superfamily. RNA methyltransferase TrmH family.

This is an uncharacterized protein from Mycolicibacterium smegmatis (strain ATCC 700084 / mc(2)155) (Mycobacterium smegmatis).